The primary structure comprises 1022 residues: MLKIFEKVFGSKHDKDIKRIQPTIQRINEIQASFQSLSDEALREKGSLLRQQVRSRLLPLEQQKKELALKLENPDILPADADNINASLDALGEEYDKVTALALEESLPDVFALVKETCRRLKGHNYQVMGREMIWDMVPYDVQLIGGIVLHSGKITEMATGEGKTLVSTLPVFLNALTGRGVHVVTVNDYLAQRDKEWMNPVFAFHGLTVGVILNTMRPEERKRQYLCDVTYGTNNEFGFDYLRDNMAGTVEEMVQRDFYFAIVDEVDSVLIDEARTPLIISGPVPNADNSKFQEIKPWIEHLVRSQQQLVASCLVEAEKLLKTKPNDFQAGLALLRVKRGQPKNSRYIKMLSQQGIAKLVQSTENEYLKDNASQMHEVDDELYFAVDEKAGTIDLTDKGRAFLSKLSHQDTDLFLLPDVGTEIAAIEGSSSFSTAEKIKQKDAVYRLFADRSERLHNISQLLKAYSLFERDDEYVVQDGKVMIVDEFTGRILSGRRYSDGLHQAIEAKENVRIEGETQTMATITIQNFFRQYHKLAGMTGTAETEASEFYEIYKLDVVVIPTNKPVVRKDMDDLVYKTRREKYNAVVLKVEELQKKGQPVLVGTASVEVSETLSRMLRAKRIVHNVLNAKQNDREAEVVAEAGQRSAVTIATNMAGRGTDIKLGEGVRELGGLYILGSERHESRRIDRQLRGRAGRQGDPGESVFFVSLEDELMRLFGSERVISVMDKLGHEEGDVIEHSMITKSIERAQKKVEEQNFSIRKRLLEYDDVLNQQRDVIYTRRRNGLQKDRLRSDIFDLLEDYCDVVVKKYQKGADGMALEEQVLRELSVEFRPEKAEFNDDTVGGVADKLFNAAHDFYLRKEREVPEDIMRQIEKYAVLSVIDKKWRDHLREIDSLREGINLRAYGQKDPLLEYKQEAFRLFVELLREIELETLSLAFKLFPITPEEAHDIEVRQKKEALRTEKLVAQHEEAGSILSHESDVPSGTAAQQPIKADVKPGRNDLCPCGSGKKYKNCHGQQQP.

ATP-binding positions include Q143, 161-165, and D661; that span reads GEGKT. A disordered region spans residues 973–1001; sequence AGSILSHESDVPSGTAAQQPIKADVKPGR. Zn(2+)-binding residues include C1005, C1007, C1016, and H1017.

It belongs to the SecA family. Monomer and homodimer. Part of the essential Sec protein translocation apparatus which comprises SecA, SecYEG and auxiliary proteins SecDF. Other proteins may also be involved. Zn(2+) serves as cofactor.

The protein localises to the cell inner membrane. It localises to the cytoplasm. It carries out the reaction ATP + H2O + cellular proteinSide 1 = ADP + phosphate + cellular proteinSide 2.. Part of the Sec protein translocase complex. Interacts with the SecYEG preprotein conducting channel. Has a central role in coupling the hydrolysis of ATP to the transfer of proteins into and across the cell membrane, serving as an ATP-driven molecular motor driving the stepwise translocation of polypeptide chains across the membrane. The protein is Protein translocase subunit SecA of Chlorobium phaeobacteroides (strain DSM 266 / SMG 266 / 2430).